Consider the following 317-residue polypeptide: Melanocyte-stimulating hormone receptor (317 aa).

The Extracellular segment spans residues 1–37; that stretch reads MRVQGSQRRLLGSLNSTPTATPHLGLAANQTGARCLE. The N-linked (GlcNAc...) asparagine glycan is linked to N29. A helical transmembrane segment spans residues 38–63; it reads VSIPDGLFLSLGLVSLVENVLVVTAI. Topologically, residues 64 to 72 are cytoplasmic; sequence AKNRNLHSP. A helical membrane pass occupies residues 73–93; the sequence is MYCFICCLALSDLLVSGSNML. Residues 94 to 118 lie on the Extracellular side of the membrane; it reads ETAVTLLLEAGALAARAAVVQQLDN. The helical transmembrane segment at 119-140 threads the bilayer; the sequence is VIDVITCSSMLSSLCFLGAIAV. The Cytoplasmic portion of the chain corresponds to 141–163; sequence DRYISIFYALRYHSIVTLPRARR. The chain crosses the membrane as a helical span at residues 164–183; the sequence is AIAAIWVASVLCSTLFIAYY. Residues 184-191 are Extracellular-facing; that stretch reads DHAAVLLC. The helical transmembrane segment at 192–211 threads the bilayer; that stretch reads LVVFFLAMLVLMAVLYVHML. Topologically, residues 212 to 240 are cytoplasmic; that stretch reads ARACQHAQGIARLHKRQRLAHQGFGLKGA. Residues 241–266 traverse the membrane as a helical segment; it reads ATLTILLGIFFLCWGPFFLHLTLIVL. The Extracellular portion of the chain corresponds to 267–279; that stretch reads CPQHPTCSCIFKN. The chain crosses the membrane as a helical span at residues 280–300; the sequence is FNLFLALIICNAIIDPLIYAF. Residues 301–317 lie on the Cytoplasmic side of the membrane; it reads RSQELRRTLKEVLLCSW. C315 carries the S-palmitoyl cysteine lipid modification.

Belongs to the G-protein coupled receptor 1 family. In terms of assembly, interacts with MGRN1, but does not undergo MGRN1-mediated ubiquitination; this interaction competes with GNAS-binding and thus inhibits agonist-induced cAMP production. Interacts with OPN3; the interaction results in a decrease in MC1R-mediated cAMP signaling and ultimately a decrease in melanin production in melanocytes.

The protein resides in the cell membrane. In terms of biological role, receptor for MSH (alpha, beta and gamma) and ACTH. The activity of this receptor is mediated by G proteins which activate adenylate cyclase. Mediates melanogenesis, the production of eumelanin (black/brown) and phaeomelanin (red/yellow), via regulation of cAMP signaling in melanocytes. This chain is Melanocyte-stimulating hormone receptor (MC1R), found in Macaca nigra (Celebes black macaque).